We begin with the raw amino-acid sequence, 202 residues long: Transcriptional regulator SdrP (202 aa).

The HTH crp-type domain occupies 117–189 (QRLKNRMAAA…YGKIQLLDLK (73 aa)). The H-T-H motif DNA-binding region spans 149-168 (HDELAAAVGSVRETVTKVIG).

In terms of assembly, homodimer.

In terms of biological role, activates transcription. The consensus DNA-binding site of this transcriptional regulator is 5'-WWGTGAN(5-7)ACACWW-3' in which W is A or T and N is G, A, T or C. Regulated genes include those encoding proteins involved in nutrient and energy supply, redox control and polyadenylation of mRNA. Also regulates genes involved in oxidative stress response such as genes encoding manganese superoxide dismutase and catalase, and genes encoding a protein involved in nucleotide excision repair of damaged DNA and putative proteins involved in redox control, protein degradation and transcriptional regulation. The sequence is that of Transcriptional regulator SdrP from Thermus thermophilus (strain ATCC 27634 / DSM 579 / HB8).